The primary structure comprises 361 residues: Large-conductance mechanosensitive channel MscMJLR (361 aa).

The next 5 helical transmembrane spans lie at 20–40 (ILSL…NALI), 65–85 (LPVA…FLYL), 89–109 (LKTA…VVFF), 137–157 (IVVL…LLLI), and 177–197 (LAVA…LIIL).

It belongs to the MscS (TC 1.A.23) family.

Its subcellular location is the cell membrane. Large-conductance mechanosensitive channel that opens in response to stretch forces in the membrane lipid bilayer. Selective for cations. Rectifies with voltage. The protein is Large-conductance mechanosensitive channel MscMJLR of Methanocaldococcus jannaschii (strain ATCC 43067 / DSM 2661 / JAL-1 / JCM 10045 / NBRC 100440) (Methanococcus jannaschii).